We begin with the raw amino-acid sequence, 144 residues long: Large-conductance mechanosensitive channel (144 aa).

The next 2 helical transmembrane spans lie at 14–34 (VLDM…VTSF) and 81–101 (GTFL…FLII).

It belongs to the MscL family. Homopentamer.

It is found in the cell inner membrane. Functionally, channel that opens in response to stretch forces in the membrane lipid bilayer. May participate in the regulation of osmotic pressure changes within the cell. The sequence is that of Large-conductance mechanosensitive channel from Bdellovibrio bacteriovorus (strain ATCC 15356 / DSM 50701 / NCIMB 9529 / HD100).